A 594-amino-acid polypeptide reads, in one-letter code: MATLSMQVSILSKEVKNVNNIGMRASKPMVARRVSTTRLRPICSASLQVEEETRRSGNYQASIWNNDYVQSFNTNQYKDEKHLKKKEELIAQVKILLNTKMEAVKQLELIEDLRNLGLTYYFQDEVKKILTSIYNDHKCFKNEQVGDLYFTSLGFRLLRLHGFDVSEEVFDFFKNEDGSDFKASLGENIKDVLQLYEASFLIREGEVILEQARVFSTKHLEKKVDEGINDEKLLAWIRHSLALPLHWRIQRLEARWFLDAYRARKDMIPLIFELGKIDFHIIQETQLEELQEVSKWWTNSNLAEKLPFVRDRIVECYFWALGLFEPHEYGYQRKMAAIIITFVTIIDDVYDVYGTLDELQLFTDAIRKWDFQSISTLPYYMQVCYLALYTYASELAYDILKDQGFNSIAYLQRSWLSLVEGFFQEAKWYYAGYTPTLAEYLENAKVSISSPTIISQVYFTLPNSTERTVVENVFGYHNILYLSGMILRLADDLGTTQFELKRGDVQKAIQCYMKDNNATEKEGAEHVKYLLREAWKEMNTAMADPECPLSEDLVDAAANLGRASQFIYLEGDGHGVQHSEIHNQMGGLIFEPYV.

Residues 1-44 constitute a chloroplast transit peptide; the sequence is MATLSMQVSILSKEVKNVNNIGMRASKPMVARRVSTTRLRPICS. Mn(2+) is bound by residues Asp347 and Asp351. A DDXXD motif motif is present at residues 347–351; the sequence is DDVYD. Homodimerization stretches follow at residues 353 to 359 and 425 to 462; these read YGTLDEL and EAKWYYAGYTPTLAEYLENAKVSISSPTIISQVYFTLP. Mn(2+) contacts are provided by Asp491 and Glu499.

Belongs to the terpene synthase family. In terms of assembly, homodimer. Requires Mn(2+) as cofactor. It depends on Mg(2+) as a cofactor. As to expression, expressed in peltate glandular trichomes.

Its subcellular location is the plastid. The protein resides in the chloroplast. The catalysed reaction is (2E)-geranyl diphosphate = gamma-terpinene + diphosphate. It catalyses the reaction (2E)-geranyl diphosphate = alpha-terpinene + diphosphate. Its pathway is secondary metabolite biosynthesis; terpenoid biosynthesis. Its function is as follows. Involved in the biosynthesis of phenolic monoterpenes natural products thymol and carvacrol which have a broad range of biological activities acting as antimicrobial compounds, insecticides, antioxidants and pharmaceutical agents. Monoterpene synthase which catalyzes the conversion of geranyl diphosphate (GPP) to gamma-terpinene and the minor products alpha-thujene, alpha-terpinene, myrcene, sabinene, (+)-R-limonene, alpha-pinene and alpha-phellandrene. This is Gamma-terpinene synthase, chloroplastic from Origanum vulgare (Wild marjoram).